The following is a 503-amino-acid chain: Maturase K (503 aa).

It belongs to the intron maturase 2 family. MatK subfamily.

It localises to the plastid. Its subcellular location is the chloroplast. In terms of biological role, usually encoded in the trnK tRNA gene intron. Probably assists in splicing its own and other chloroplast group II introns. The protein is Maturase K of Panax quinquefolius (American ginseng).